The chain runs to 215 residues: Oligoribonuclease (215 aa).

The Exonuclease domain maps to 5-170; that stretch reads LVWIDCEMTG…ADIHESIREL (166 aa). Residue tyrosine 127 is part of the active site.

It belongs to the oligoribonuclease family.

It is found in the cytoplasm. 3'-to-5' exoribonuclease specific for small oligoribonucleotides. In Mycobacterium leprae (strain TN), this protein is Oligoribonuclease.